Consider the following 236-residue polypeptide: MSGENRAVVPIESNPEVFTNFAHKLGLKNEWAYFDIYSLTEPELLAFLPRPVKAIVLLFPINEDRKSSTSQQITSSYDVIWFKQSVKNACGLYAILHSLSNNQSLLEPGSDLDNFLKSQSDTSSSKNRFDDVTTDQFVLNVIKENVQTFSTGQSEAPEATADTNLHYITYVEENGGIFELDGRNLSGPLYLGKSDPTATDLIEQELVRVRVASYMENANEEDVLNFAMLGLGPNWE.

One can recognise a UCH catalytic domain in the interval 7-233; it reads AVVPIESNPE…LNFAMLGLGP (227 aa). The segment at 10-15 is interaction with ubiquitin; it reads PIESNP. The Nucleophile role is filled by Cys90. The tract at residues 149–157 is interaction with ubiquitin; that stretch reads FSTGQSEAP. His166 functions as the Proton donor in the catalytic mechanism. Residues 219–228 form an interaction with ubiquitin region; sequence NEEDVLNFAM.

The protein belongs to the peptidase C12 family.

It carries out the reaction Thiol-dependent hydrolysis of ester, thioester, amide, peptide and isopeptide bonds formed by the C-terminal Gly of ubiquitin (a 76-residue protein attached to proteins as an intracellular targeting signal).. In terms of biological role, deubiquitinating enzyme (DUB) that controls levels of cellular ubiquitin through processing of ubiquitin precursors and ubiquitinated proteins. Thiol protease that recognizes and hydrolyzes a peptide bond at the C-terminal glycine of either ubiquitin or RUB1. Preferentially cleaves ubiquitin from peptides and small adducts. This chain is Ubiquitin carboxyl-terminal hydrolase YUH1 (YUH1), found in Saccharomyces cerevisiae (strain ATCC 204508 / S288c) (Baker's yeast).